The chain runs to 848 residues: Dynein axonemal intermediate chain 4 (848 aa).

2 disordered regions span residues 345-370 (SKAN…SETS) and 431-464 (EPEP…IHAE). Residues 359–370 (PGSTTEKNSETS) are compositionally biased toward polar residues. Residues 442-456 (ESAKHEEVEEESKKE) show a composition bias toward basic and acidic residues. WD repeat units lie at residues 534–574 (QSPY…NVPV), 583–631 (KHLG…DCYD), 658–698 (SRQA…QYLD), 702–742 (GHKG…PSLS), 745–784 (PATS…LDPL), and 790–829 (NPGI…TVLE).

Part of the multisubunit axonemal dynein complex formed at least of two heavy chains and a number of intermediate and light chains. Associated with axonemal dynein subunits such as, DNAH2, DNAI3, and DYNLT1. Interacts with DYNLT1.

It is found in the cytoplasm. Its subcellular location is the cytoskeleton. The protein resides in the flagellum axoneme. The protein localises to the cilium axoneme. It localises to the dynein axonemal particle. In terms of biological role, plays a critical role in the assembly of axonemal dynein complex, thereby playing a role in ciliary motility. The polypeptide is Dynein axonemal intermediate chain 4 (Homo sapiens (Human)).